The sequence spans 63 residues: Large ribosomal subunit protein uL30 (63 aa).

It belongs to the universal ribosomal protein uL30 family. As to quaternary structure, part of the 50S ribosomal subunit.

The sequence is that of Large ribosomal subunit protein uL30 from Coxiella burnetii (strain CbuK_Q154) (Coxiella burnetii (strain Q154)).